The following is a 577-amino-acid chain: Arginine--tRNA ligase (577 aa).

A 'HIGH' region motif is present at residues 122–132 (PNVAKEMHVGH).

The protein belongs to the class-I aminoacyl-tRNA synthetase family. Monomer.

The protein resides in the cytoplasm. It carries out the reaction tRNA(Arg) + L-arginine + ATP = L-arginyl-tRNA(Arg) + AMP + diphosphate. This chain is Arginine--tRNA ligase, found in Enterobacter sp. (strain 638).